The chain runs to 1843 residues: Zinc finger protein 142 (1843 aa).

2 C2H2-type zinc fingers span residues 103–127 (YFCE…TETH) and 164–186 (LPCP…FKIH). The disordered stretch occupies residues 294–357 (PAAKLPPGHR…LEGHVGSGTE (64 aa)). A compositionally biased stretch (acidic residues) spans 318 to 329 (SAEEEDAEEEES). Residues 330–340 (VTQKDSQKVMD) show a composition bias toward basic and acidic residues. A Phosphoserine modification is found at S354. The C2H2-type 3 zinc-finger motif lies at 363–385 (HMCPECKRCFKKRTHLVEHLHLH). The segment at 391 to 413 (LQCPNCQKFFTSKSKLKTHLLRE) adopts a C2H2-type 4; degenerate zinc-finger fold. 7 C2H2-type zinc fingers span residues 453–475 (YACP…LKSH), 543–566 (FHCP…KQGH), 601–623 (HQCS…MLLH), 629–651 (HKCE…MLTH), 657–679 (YMCT…MRKH), 685–707 (YQCN…KLRH), and 744–767 (YPCR…NCKH). K794 participates in a covalent cross-link: Glycyl lysine isopeptide (Lys-Gly) (interchain with G-Cter in SUMO2). Disordered stretches follow at residues 819–888 (QCLA…LGEV) and 1103–1177 (PKPV…TGTS). Basic and acidic residues predominate over residues 837-846 (PEREDREHEI). Residues 1157–1167 (LPTPSDFPTSP) show a composition bias toward pro residues. Residues 1168-1177 (PENSLPTGTS) show a composition bias toward polar residues. 9 consecutive C2H2-type zinc fingers follow at residues 1331–1354 (LQCG…RLKH), 1388–1411 (IPCS…LRVH), 1446–1469 (FSCT…LRRH), 1514–1537 (LECG…RQHH), 1608–1630 (YKCT…SRIH), 1636–1658 (YHCH…MRIH), 1664–1686 (YLCP…MTKH), 1692–1715 (YQCP…ETRH), and 1721–1743 (FMCE…LRKH). Residues K1353 and K1402 each participate in a glycyl lysine isopeptide (Lys-Gly) (interchain with G-Cter in SUMO2) cross-link. K1747 is covalently cross-linked (Glycyl lysine isopeptide (Lys-Gly) (interchain with G-Cter in SUMO2)). The C2H2-type 21 zinc-finger motif lies at 1749–1771 (YVCNVCHRAFRWAAGLRHHALTH). The disordered stretch occupies residues 1795–1843 (HVRRHHPDQADPNQGVGKDPTTPTVHLHDVKLEDPSPPAPPAPSTGPEG). Residues 1829–1843 (PSPPAPPAPSTGPEG) are compositionally biased toward pro residues.

This sequence belongs to the krueppel C2H2-type zinc-finger protein family.

It localises to the nucleus. In terms of biological role, may be involved in transcriptional regulation. This Mus musculus (Mouse) protein is Zinc finger protein 142.